Consider the following 662-residue polypeptide: NADH-ubiquinone oxidoreductase chain 5 (662 aa).

A run of 16 helical transmembrane segments spans residues 40 to 62, 77 to 99, 112 to 129, 133 to 155, 168 to 190, 200 to 222, 243 to 262, 272 to 294, 301 to 320, 325 to 347, 360 to 382, 408 to 430, 450 to 472, 510 to 529, 609 to 631, and 636 to 658; these read AALS…IVIG, LFDS…VHLY, RFFS…VLVA, YFIM…NFWY, LTVN…WVFG, VAPY…GAMA, VSAL…LMLR, TVLV…TGLL, VIAY…VGLS, ALFH…GAVI, GGLV…SLMA, TIAY…RLVS, APMI…GYIA, LLPA…LYHV, GVIT…LVFA, and VFNE…LPSS.

Belongs to the complex I subunit 5 family.

It localises to the mitochondrion inner membrane. It carries out the reaction a ubiquinone + NADH + 5 H(+)(in) = a ubiquinol + NAD(+) + 4 H(+)(out). Its function is as follows. Core subunit of the mitochondrial membrane respiratory chain NADH dehydrogenase (Complex I) that is believed to belong to the minimal assembly required for catalysis. Complex I functions in the transfer of electrons from NADH to the respiratory chain. The immediate electron acceptor for the enzyme is believed to be ubiquinone. This chain is NADH-ubiquinone oxidoreductase chain 5 (ND5), found in Cryptococcus neoformans var. grubii serotype A (strain H99 / ATCC 208821 / CBS 10515 / FGSC 9487) (Filobasidiella neoformans var. grubii).